A 1883-amino-acid chain; its full sequence is Endoribonuclease Dicer homolog 1 (1883 aa).

Disordered stretches follow at residues 71 to 97 (AESS…PELP), 129 to 188 (ARKE…DDRR), and 221 to 262 (RSGT…EKPV). Residues 75–96 (PAPPPPPPPPLPEPVPVAPPEL) show a composition bias toward pro residues. Composition is skewed to basic and acidic residues over residues 129-138 (ARKEPRRESH) and 228-262 (ESDR…EKPV). Residues 274-413 (VLEQAKSRNT…QEDCAIKIRN (140 aa)) enclose the Helicase ATP-binding domain. 287–294 (LETGAGKT) contacts ATP. The DECH box motif lies at 358–361 (DECH). A disordered region spans residues 577-604 (KSETSDVEMQNTEKHNTNDLEEGELPDS). The 161-residue stretch at 629–789 (LIKILLKYQH…RTDLSHLDGT (161 aa)) folds into the Helicase C-terminal domain. Residues 817-912 (AVGLIHFYCS…LPDRGSGEGE (96 aa)) form the Dicer dsRNA-binding fold domain. The tract at residues 901–928 (TLLPDRGSGEGEKTEQNDEGEPLPGTAR) is disordered. Basic and acidic residues predominate over residues 907–916 (GSGEGEKTEQ). Residues 1163 to 1296 (HFSDYQNQGK…LPPELCLVHP (134 aa)) form the PAZ domain. RNase III domains lie at 1320–1498 (LAVQ…VAGG) and 1538–1686 (FDTL…LDSG). Residues E1576, D1672, and E1675 each contribute to the Mg(2+) site. 2 DRBM domains span residues 1712 to 1775 (HPVR…VLKE) and 1797 to 1872 (FTRQ…LLNR).

This sequence belongs to the helicase family. Dicer subfamily. May interact with ARGONAUTE1 or PINHEAD through their common PAZ domains. Requires Mg(2+) as cofactor. The cofactor is Mn(2+).

The protein localises to the nucleus. Functionally, involved in the RNA silencing pathway. Cleaves double-stranded RNA to produce microRNAs (miRNAs) of 21-24 nucleotides which target the selective destruction of complementary RNAs. Regulates by this way the development of the plant. May not be involved in small interfering RNAs (siRNAs) production. The protein is Endoribonuclease Dicer homolog 1 (DCL1) of Oryza sativa subsp. japonica (Rice).